Reading from the N-terminus, the 303-residue chain is N-acetyl-D-glucosamine kinase (303 aa).

ATP contacts are provided by residues Gly4–Lys11 and Gly133–Leu140. 4 residues coordinate Zn(2+): His157, Cys177, Cys179, and Cys184.

It belongs to the ROK (NagC/XylR) family. NagK subfamily.

The catalysed reaction is N-acetyl-D-glucosamine + ATP = N-acetyl-D-glucosamine 6-phosphate + ADP + H(+). It participates in cell wall biogenesis; peptidoglycan recycling. Functionally, catalyzes the phosphorylation of N-acetyl-D-glucosamine (GlcNAc) derived from cell-wall degradation, yielding GlcNAc-6-P. This is N-acetyl-D-glucosamine kinase from Citrobacter koseri (strain ATCC BAA-895 / CDC 4225-83 / SGSC4696).